Reading from the N-terminus, the 151-residue chain is Deoxyuridine 5'-triphosphate nucleotidohydrolase (151 aa).

Substrate-binding positions include 70 to 72 (RSG), Asn83, and 87 to 89 (LID).

Belongs to the dUTPase family. The cofactor is Mg(2+).

The enzyme catalyses dUTP + H2O = dUMP + diphosphate + H(+). The protein operates within pyrimidine metabolism; dUMP biosynthesis; dUMP from dCTP (dUTP route): step 2/2. In terms of biological role, this enzyme is involved in nucleotide metabolism: it produces dUMP, the immediate precursor of thymidine nucleotides and it decreases the intracellular concentration of dUTP so that uracil cannot be incorporated into DNA. This is Deoxyuridine 5'-triphosphate nucleotidohydrolase from Methylococcus capsulatus (strain ATCC 33009 / NCIMB 11132 / Bath).